The following is a 152-amino-acid chain: Homeobox protein ceh-63 (152 aa).

Polar residues predominate over residues 21–30 (NDTNSSQQIK). Disordered regions lie at residues 21-48 (NDTN…RTTF) and 92-126 (RRTK…SQHV). Positions 35-44 (PPKRSNRPTK) are enriched in basic residues. The segment at residues 41–100 (RPTKRTTFTSEQVTLLELEFAKNEYICKDRRGELAQTIELTECQVKTWFQNRRTKKRRCT) is a DNA-binding region (homeobox). A compositionally biased stretch (polar residues) spans 116–126 (PSPQNPSSQHV).

In terms of assembly, may interact with homeobox protein ceh-14.

Its subcellular location is the nucleus. Probable transcription factor, modulating expression of helix-loop-helix protein mbr-1, perhaps acting in concert with homeobox protein ceh-14. May play a minor role in axon guidance in the DVC interneuron. The protein is Homeobox protein ceh-63 of Caenorhabditis elegans.